Reading from the N-terminus, the 326-residue chain is L-lactate dehydrogenase (326 aa).

NAD(+)-binding positions include valine 20, aspartate 41, lysine 46, tyrosine 71, and 85-86 (GA). Residues glutamine 88 and arginine 94 each coordinate substrate. NAD(+)-binding positions include serine 107, 124-126 (AAN), and serine 149. 126-129 (NPVD) serves as a coordination point for substrate. 154-157 (DTAR) is a binding site for substrate. Residues arginine 159, 171–174 (RSVH), and histidine 174 each bind beta-D-fructose 1,6-bisphosphate. Histidine 181 serves as the catalytic Proton acceptor. Residue tyrosine 226 is modified to Phosphotyrosine. Threonine 235 is a substrate binding site.

The protein belongs to the LDH/MDH superfamily. LDH family. In terms of assembly, homotetramer.

It localises to the cytoplasm. The catalysed reaction is (S)-lactate + NAD(+) = pyruvate + NADH + H(+). The protein operates within fermentation; pyruvate fermentation to lactate; (S)-lactate from pyruvate: step 1/1. With respect to regulation, allosterically activated by fructose 1,6-bisphosphate (FBP) alone under acidic conditions, while it requires additional activation factors such as divalent cations (Mn(2+)) under neutral conditions. Under acidic conditions, Mn(2+) is an inhibitor in the absence of fructose 1,6-bisphosphate (FBP). In case of L.casei, L-LDH binds four fructose 1,6-bisphosphate (FBP) molecules per tetramer, while usual allosteric L-LDH binds only two fructose 1,6-bisphosphate (FBP) molecules per tetramer. Its function is as follows. Catalyzes the conversion of lactate to pyruvate. This is L-lactate dehydrogenase from Lacticaseibacillus casei (Lactobacillus casei).